The chain runs to 397 residues: P2X purinoceptor 3 (397 aa).

The Cytoplasmic portion of the chain corresponds to 1-20 (MNCISDFFTYETTKSVVVKS). Residues 21 to 43 (WTIGIINRVVQLLIISYFVGWVF) traverse the membrane as a helical segment. The Extracellular portion of the chain corresponds to 44–322 (LHEKAYQVRD…AGKFNIIPTI (279 aa)). ATP is bound by residues Lys-63 and Lys-65. Disulfide bonds link Cys-107-Cys-153, Cys-116-Cys-137, and Cys-122-Cys-147. Glu-111 is a binding site for Mg(2+). Asn-139 carries an N-linked (GlcNAc...) asparagine glycan. Asp-158 serves as a coordination point for Mg(2+). Ca(2+) is bound at residue Asp-158. Asn-170 carries an N-linked (GlcNAc...) asparagine glycan. Thr-172 is a binding site for ATP. Residue Asn-194 is glycosylated (N-linked (GlcNAc...) asparagine). Cystine bridges form between Cys-203-Cys-213 and Cys-247-Cys-256. ATP is bound by residues Ser-275, Asn-279, and Arg-281. The N-linked (GlcNAc...) asparagine glycan is linked to Asn-290. Lys-299 serves as a coordination point for ATP. Residues 323 to 341 (ISSVAAFTSVGVGTVLCDI) traverse the membrane as a helical segment. Residues 342–397 (ILLNFLKGADQYKAKKFEEVNETTLKIAALTNPVYPSDQTTAEKQSTDSGAFSIGH) are Cytoplasmic-facing. Residues 378–391 (SDQTTAEKQSTDSG) show a composition bias toward polar residues. A disordered region spans residues 378–397 (SDQTTAEKQSTDSGAFSIGH).

It belongs to the P2X receptor family. As to quaternary structure, homotrimer. Forms heterotrimer with P2RX2. Heterotrimeric P2RX2/3 has a ligand dose-response profile that is distinct from either homotrimeric P2RX2 or P2RX3.

The protein localises to the cell membrane. It catalyses the reaction Ca(2+)(in) = Ca(2+)(out). The enzyme catalyses Na(+)(in) = Na(+)(out). Its activity is regulated as follows. Has high sensitivity to ATP. Fast activation by external ATP. Exhibits rapid desensitization. Sensitives to the ATP agonist:alpha/beta-methylene-ATP. Subject to allosteric inhibition by AF-219. Mg(2+) and Ca(2+) slow deactivation of P2RX3. In terms of biological role, extracellular ATP-activated non-selective cation channel. Plays particularly important role in sensory neurons where its activation is critical for gustatory, nociceptive responses, visceral reflexes and sensory hypersensitization. The polypeptide is P2X purinoceptor 3 (P2RX3) (Homo sapiens (Human)).